We begin with the raw amino-acid sequence, 162 residues long: Novel acetylcholine receptor chaperone (162 aa).

Residues 1 to 5 (MASPR) lie on the Cytoplasmic side of the membrane. A helical transmembrane segment spans residues 6-26 (TVTIVALSVTLGLFFVFMGTI). Topologically, residues 27–61 (KLTPRLSKDAYSEMKRAYKSYVKALPALKKIGISS) are lumenal. Residues 62–82 (VFLRKAIGSLELACGIVLTLV) traverse the membrane as a helical segment. The Cytoplasmic portion of the chain corresponds to 83–88 (PGRPKD). Residues 89 to 109 (VANFILLLLVLIVLFFHQLVG) traverse the membrane as a helical segment. The Lumenal portion of the chain corresponds to 110 to 114 (DPLKR). A helical membrane pass occupies residues 115-131 (YAHALVFGILLTCRLLV). Residues 132 to 162 (SRQPEEEFPEKKLSRGNNGAHSREPIKMKVS) are Cytoplasmic-facing. Residues 141–162 (EKKLSRGNNGAHSREPIKMKVS) are disordered. Basic and acidic residues predominate over residues 152–162 (HSREPIKMKVS).

It belongs to the DoxX family.

The protein localises to the peroxisome membrane. It localises to the cytoplasmic vesicle. The protein resides in the endoplasmic reticulum membrane. Functionally, molecular chaperone which mediates the proper assembly and functional expression of the nicotinic acetylcholine receptors (nAChRs) throughout the brain. Essential for the proper folding, assembly, function and surface trafficking of alpha-7 (CHRNA7), alpha-4-beta-2, alpha-3-beta-2 and alpha-3-beta-4 receptors. The chain is Novel acetylcholine receptor chaperone (tmem35a) from Xenopus tropicalis (Western clawed frog).